The sequence spans 804 residues: Enhancer of polycomb homolog 2 (804 aa).

Disordered stretches follow at residues 372–395 (QSSDDDEFPQVPSPLSELEEENDP), 484–508 (GFSSSSHIAQPPSSPSRTNASDRHC), 603–624 (QSQQSLQQSHPKAQGSGSSDCM), and 646–669 (PVRSEVNKDQNAGHSNLNGVVQPS). Composition is skewed to polar residues over residues 611 to 624 (SHPKAQGSGSSDCM) and 654 to 669 (DQNAGHSNLNGVVQPS).

The protein belongs to the enhancer of polycomb family.

Its subcellular location is the nucleus. Functionally, may play a role in transcription or DNA repair. The chain is Enhancer of polycomb homolog 2 (epc2) from Xenopus laevis (African clawed frog).